A 141-amino-acid chain; its full sequence is Large ribosomal subunit protein uL11 (141 aa).

It belongs to the universal ribosomal protein uL11 family. Part of the ribosomal stalk of the 50S ribosomal subunit. Interacts with L10 and the large rRNA to form the base of the stalk. L10 forms an elongated spine to which L12 dimers bind in a sequential fashion forming a multimeric L10(L12)X complex. Post-translationally, one or more lysine residues are methylated.

Its function is as follows. Forms part of the ribosomal stalk which helps the ribosome interact with GTP-bound translation factors. The chain is Large ribosomal subunit protein uL11 from Chlorobium phaeovibrioides (strain DSM 265 / 1930) (Prosthecochloris vibrioformis (strain DSM 265)).